The primary structure comprises 306 residues: Ribosomal protein L11 methyltransferase (306 aa).

S-adenosyl-L-methionine is bound by residues threonine 154, glycine 179, aspartate 201, and asparagine 242.

The protein belongs to the methyltransferase superfamily. PrmA family.

It is found in the cytoplasm. The enzyme catalyses L-lysyl-[protein] + 3 S-adenosyl-L-methionine = N(6),N(6),N(6)-trimethyl-L-lysyl-[protein] + 3 S-adenosyl-L-homocysteine + 3 H(+). Methylates ribosomal protein L11. The chain is Ribosomal protein L11 methyltransferase from Xylella fastidiosa (strain 9a5c).